Here is a 458-residue protein sequence, read N- to C-terminus: Phosphoglucosamine mutase (458 aa).

The active-site Phosphoserine intermediate is Ser-109. Mg(2+) contacts are provided by Ser-109, Asp-251, Asp-253, and Asp-255. The residue at position 109 (Ser-109) is a Phosphoserine.

This sequence belongs to the phosphohexose mutase family. It depends on Mg(2+) as a cofactor. In terms of processing, activated by phosphorylation.

The enzyme catalyses alpha-D-glucosamine 1-phosphate = D-glucosamine 6-phosphate. Functionally, catalyzes the conversion of glucosamine-6-phosphate to glucosamine-1-phosphate. This Myxococcus xanthus (strain DK1622) protein is Phosphoglucosamine mutase.